Here is a 203-residue protein sequence, read N- to C-terminus: Urease accessory protein UreG (203 aa).

Residue 14–21 (GPVGSGKT) participates in GTP binding.

It belongs to the SIMIBI class G3E GTPase family. UreG subfamily. Homodimer. UreD, UreF and UreG form a complex that acts as a GTP-hydrolysis-dependent molecular chaperone, activating the urease apoprotein by helping to assemble the nickel containing metallocenter of UreC. The UreE protein probably delivers the nickel.

It localises to the cytoplasm. In terms of biological role, facilitates the functional incorporation of the urease nickel metallocenter. This process requires GTP hydrolysis, probably effectuated by UreG. The polypeptide is Urease accessory protein UreG (Agrobacterium fabrum (strain C58 / ATCC 33970) (Agrobacterium tumefaciens (strain C58))).